A 523-amino-acid polypeptide reads, in one-letter code: Sensory neuron membrane protein 1 (523 aa).

The Cytoplasmic portion of the chain corresponds to 1 to 11 (MQLPKELKYAA). The chain crosses the membrane as a helical span at residues 12–32 (IAGGVALFGLIFGWVLFPTIL). The Extracellular portion of the chain corresponds to 33 to 458 (KSQLKKEMAL…HQLFIPKRVV (426 aa)). 2 N-linked (GlcNAc...) asparagine glycosylation sites follow: N67 and N229. 3 disulfides stabilise this stretch: C268–C333, C297–C352, and C335–C341. N-linked (GlcNAc...) asparagine glycosylation is present at N440. A helical transmembrane segment spans residues 459 to 479 (GVLRWWVVSFGSLGAVIGIVF). The Cytoplasmic portion of the chain corresponds to 480 to 523 (HFRDHIMRLAVSGDTKVSKVTPEEPEQKDISVIGQAQEPAKVNI).

Belongs to the CD36 family. As to expression, detected in sensory neurons in the antenna.

The protein resides in the cell membrane. Functionally, plays an olfactory role that is not restricted to pheromone sensitivity. This chain is Sensory neuron membrane protein 1, found in Heliothis virescens (Tobacco budworm moth).